Here is a 320-residue protein sequence, read N- to C-terminus: L-lactate dehydrogenase 2 (320 aa).

NAD(+) is bound by residues valine 16, aspartate 37, lysine 42, and tyrosine 69. Residue arginine 94 coordinates substrate. NAD(+) is bound by residues serine 107, 124–126 (VTN), and threonine 149. 126–129 (NPVD) lines the substrate pocket. 154–157 (DTAR) contacts substrate. 2 residues coordinate beta-D-fructose 1,6-bisphosphate: arginine 159 and histidine 174. Histidine 181 acts as the Proton acceptor in catalysis. Residue threonine 235 coordinates substrate.

The protein belongs to the LDH/MDH superfamily. LDH family. As to quaternary structure, homotetramer.

The protein localises to the cytoplasm. It carries out the reaction (S)-lactate + NAD(+) = pyruvate + NADH + H(+). It functions in the pathway fermentation; pyruvate fermentation to lactate; (S)-lactate from pyruvate: step 1/1. Allosterically activated by fructose 1,6-bisphosphate (FBP). Catalyzes the conversion of lactate to pyruvate. The sequence is that of L-lactate dehydrogenase 2 from Clostridium acetobutylicum (strain ATCC 824 / DSM 792 / JCM 1419 / IAM 19013 / LMG 5710 / NBRC 13948 / NRRL B-527 / VKM B-1787 / 2291 / W).